The chain runs to 383 residues: S-adenosylmethionine synthase (383 aa).

H22 lines the ATP pocket. D24 is a binding site for Mg(2+). E50 serves as a coordination point for K(+). 2 residues coordinate L-methionine: E63 and Q99. The tract at residues 99–109 (QSLEINQAVLK) is flexible loop. Residues 160–162 (DMK), D235, 241–242 (RK), S258, and K262 contribute to the ATP site. Residue D235 coordinates L-methionine. Residue K266 coordinates L-methionine.

The protein belongs to the AdoMet synthase family. As to quaternary structure, homotetramer; dimer of dimers. Mg(2+) serves as cofactor. Requires K(+) as cofactor.

It localises to the cytoplasm. It catalyses the reaction L-methionine + ATP + H2O = S-adenosyl-L-methionine + phosphate + diphosphate. It participates in amino-acid biosynthesis; S-adenosyl-L-methionine biosynthesis; S-adenosyl-L-methionine from L-methionine: step 1/1. Catalyzes the formation of S-adenosylmethionine (AdoMet) from methionine and ATP. The overall synthetic reaction is composed of two sequential steps, AdoMet formation and the subsequent tripolyphosphate hydrolysis which occurs prior to release of AdoMet from the enzyme. The polypeptide is S-adenosylmethionine synthase (Mycoplasma genitalium (strain ATCC 33530 / DSM 19775 / NCTC 10195 / G37) (Mycoplasmoides genitalium)).